The following is a 97-amino-acid chain: Large ribosomal subunit protein uL23 (97 aa).

The protein belongs to the universal ribosomal protein uL23 family. In terms of assembly, part of the 50S ribosomal subunit. Contacts protein L29, and trigger factor when it is bound to the ribosome.

One of the early assembly proteins it binds 23S rRNA. One of the proteins that surrounds the polypeptide exit tunnel on the outside of the ribosome. Forms the main docking site for trigger factor binding to the ribosome. The chain is Large ribosomal subunit protein uL23 from Rhizobium etli (strain CIAT 652).